A 165-amino-acid chain; its full sequence is Neurotrophin-3 (165 aa).

The signal sequence occupies residues 1–3 (IQS). Residues 4–119 (TSMDQGSLSE…VLNRTSRRKR (116 aa)) constitute a propeptide that is removed on maturation. The disordered stretch occupies residues 32–61 (KVPKQAARTKDGTQTTAKKTEAEPEATANK). An N-linked (GlcNAc...) asparagine glycan is attached at N112.

It belongs to the NGF-beta family.

It is found in the secreted. Seems to promote the survival of visceral and proprioceptive sensory neurons. This Xenopeltis unicolor (Sunbeam snake) protein is Neurotrophin-3 (NTF3).